Here is a 570-residue protein sequence, read N- to C-terminus: PTS system lactose-specific EIICB component (570 aa).

Residues 9–410 (IEKGKPFFEK…VVDIIIYYPF (402 aa)) form the PTS EIIC type-3 domain. The next 9 helical transmembrane spans lie at 31-51 (GFIS…IAYV), 65-85 (AILM…VAGT), 104-124 (INFI…ASDP), 133-153 (AFMG…TVIV), 178-198 (FKDL…DLVI), 223-243 (GWIG…VGIH), 283-303 (MFIV…MFMW), 340-360 (VFFI…KLFV), and 382-402 (IIMG…LIVV). The PTS EIIB type-3 domain maps to 467–570 (QTNVLVLCAG…LDFVQQQFEN (104 aa)). C474 serves as the catalytic Phosphocysteine intermediate; for EIIB activity. C474 carries the phosphocysteine; by EIIA modification.

It is found in the cell membrane. It catalyses the reaction lactose(out) + N(pros)-phospho-L-histidyl-[protein] = lactose 6-phosphate(in) + L-histidyl-[protein]. In terms of biological role, the phosphoenolpyruvate-dependent sugar phosphotransferase system (sugar PTS), a major carbohydrate active transport system, catalyzes the phosphorylation of incoming sugar substrates concomitantly with their translocation across the cell membrane. The enzyme II LacEF PTS system is involved in lactose transport. This is PTS system lactose-specific EIICB component from Staphylococcus aureus (strain MSSA476).